Here is a 452-residue protein sequence, read N- to C-terminus: Phosphoglucosamine mutase (452 aa).

The active-site Phosphoserine intermediate is Ser-108. 4 residues coordinate Mg(2+): Ser-108, Asp-247, Asp-249, and Asp-251. Phosphoserine is present on Ser-108.

The protein belongs to the phosphohexose mutase family. Mg(2+) is required as a cofactor. In terms of processing, activated by phosphorylation.

It carries out the reaction alpha-D-glucosamine 1-phosphate = D-glucosamine 6-phosphate. In terms of biological role, catalyzes the conversion of glucosamine-6-phosphate to glucosamine-1-phosphate. The chain is Phosphoglucosamine mutase from Burkholderia pseudomallei (strain 668).